We begin with the raw amino-acid sequence, 191 residues long: dTTP/UTP pyrophosphatase (191 aa).

Asp-65 functions as the Proton acceptor in the catalytic mechanism.

Belongs to the Maf family. YhdE subfamily. It depends on a divalent metal cation as a cofactor.

It is found in the cytoplasm. The enzyme catalyses dTTP + H2O = dTMP + diphosphate + H(+). The catalysed reaction is UTP + H2O = UMP + diphosphate + H(+). Functionally, nucleoside triphosphate pyrophosphatase that hydrolyzes dTTP and UTP. May have a dual role in cell division arrest and in preventing the incorporation of modified nucleotides into cellular nucleic acids. This is dTTP/UTP pyrophosphatase from Leptospira biflexa serovar Patoc (strain Patoc 1 / Ames).